The primary structure comprises 256 residues: Probable ABC transporter ATP-binding protein spyM18_0273 (256 aa).

The ABC transporter domain maps to 4-246 (LEINNLHVSI…EKEGYAGIAQ (243 aa)). Residue 36–43 (GPNGTGKS) participates in ATP binding.

The protein belongs to the ABC transporter superfamily. Ycf16 family.

The protein localises to the cell membrane. In Streptococcus pyogenes serotype M18 (strain MGAS8232), this protein is Probable ABC transporter ATP-binding protein spyM18_0273.